The chain runs to 290 residues: ATP synthase subunit a (290 aa).

A run of 7 helical transmembrane segments spans residues 54 to 74 (AVHL…ILLF), 115 to 135 (IAPL…LKWI), 136 to 156 (PVDY…KIVP), 164 to 184 (FGLS…VKGF), 201 to 221 (LVPF…LSLA), 233 to 253 (VVFI…NVPW), and 254 to 274 (AIFH…LTVV).

The protein belongs to the ATPase A chain family. In terms of assembly, F-type ATPases have 2 components, CF(1) - the catalytic core - and CF(0) - the membrane proton channel. CF(1) has five subunits: alpha(3), beta(3), gamma(1), delta(1), epsilon(1). CF(0) has three main subunits: a(1), b(2) and c(9-12). The alpha and beta chains form an alternating ring which encloses part of the gamma chain. CF(1) is attached to CF(0) by a central stalk formed by the gamma and epsilon chains, while a peripheral stalk is formed by the delta and b chains.

It is found in the cell inner membrane. Its function is as follows. Key component of the proton channel; it plays a direct role in the translocation of protons across the membrane. The chain is ATP synthase subunit a from Stutzerimonas stutzeri (strain A1501) (Pseudomonas stutzeri).